Here is a 185-residue protein sequence, read N- to C-terminus: Peptidyl-tRNA hydrolase (185 aa).

Residue Y14 coordinates tRNA. The active-site Proton acceptor is the H19. Y64, N66, and N112 together coordinate tRNA.

The protein belongs to the PTH family. As to quaternary structure, monomer.

It localises to the cytoplasm. It carries out the reaction an N-acyl-L-alpha-aminoacyl-tRNA + H2O = an N-acyl-L-amino acid + a tRNA + H(+). Functionally, hydrolyzes ribosome-free peptidyl-tRNAs (with 1 or more amino acids incorporated), which drop off the ribosome during protein synthesis, or as a result of ribosome stalling. Its function is as follows. Catalyzes the release of premature peptidyl moieties from peptidyl-tRNA molecules trapped in stalled 50S ribosomal subunits, and thus maintains levels of free tRNAs and 50S ribosomes. The polypeptide is Peptidyl-tRNA hydrolase (Exiguobacterium sibiricum (strain DSM 17290 / CCUG 55495 / CIP 109462 / JCM 13490 / 255-15)).